The following is a 598-amino-acid chain: Elongation factor 4 (598 aa).

The tr-type G domain occupies 5 to 187; sequence ANIRNFSIIA…ALVEFIPAPT (183 aa). GTP-binding positions include 17–22 and 134–137; these read DHGKST and NKID.

It belongs to the TRAFAC class translation factor GTPase superfamily. Classic translation factor GTPase family. LepA subfamily.

It is found in the cell inner membrane. The enzyme catalyses GTP + H2O = GDP + phosphate + H(+). In terms of biological role, required for accurate and efficient protein synthesis under certain stress conditions. May act as a fidelity factor of the translation reaction, by catalyzing a one-codon backward translocation of tRNAs on improperly translocated ribosomes. Back-translocation proceeds from a post-translocation (POST) complex to a pre-translocation (PRE) complex, thus giving elongation factor G a second chance to translocate the tRNAs correctly. Binds to ribosomes in a GTP-dependent manner. In Psychrobacter arcticus (strain DSM 17307 / VKM B-2377 / 273-4), this protein is Elongation factor 4.